The chain runs to 258 residues: D-beta-hydroxybutyrate dehydrogenase (258 aa).

NAD(+) is bound at residue 8-32 (LVTGSTSGIGLGIAKALAAQGANII). Ser140 provides a ligand contact to substrate. The active-site Proton acceptor is the Tyr153.

This sequence belongs to the short-chain dehydrogenases/reductases (SDR) family.

It carries out the reaction (R)-3-hydroxybutanoate + NAD(+) = acetoacetate + NADH + H(+). The polypeptide is D-beta-hydroxybutyrate dehydrogenase (hbdH1) (Cupriavidus necator (strain ATCC 17699 / DSM 428 / KCTC 22496 / NCIMB 10442 / H16 / Stanier 337) (Ralstonia eutropha)).